Reading from the N-terminus, the 237-residue chain is Demethylmenaquinone methyltransferase (237 aa).

S-adenosyl-L-methionine is bound by residues threonine 58, aspartate 79, and 106–107 (NA).

Belongs to the class I-like SAM-binding methyltransferase superfamily. MenG/UbiE family.

The enzyme catalyses a 2-demethylmenaquinol + S-adenosyl-L-methionine = a menaquinol + S-adenosyl-L-homocysteine + H(+). Its pathway is quinol/quinone metabolism; menaquinone biosynthesis; menaquinol from 1,4-dihydroxy-2-naphthoate: step 2/2. Its function is as follows. Methyltransferase required for the conversion of demethylmenaquinol (DMKH2) to menaquinol (MKH2). The chain is Demethylmenaquinone methyltransferase from Bacillus cereus (strain ATCC 10987 / NRS 248).